Reading from the N-terminus, the 292-residue chain is Elongation factor Ts (292 aa).

Residues 82–85 (TDFV) are involved in Mg(2+) ion dislocation from EF-Tu.

This sequence belongs to the EF-Ts family.

The protein resides in the cytoplasm. In terms of biological role, associates with the EF-Tu.GDP complex and induces the exchange of GDP to GTP. It remains bound to the aminoacyl-tRNA.EF-Tu.GTP complex up to the GTP hydrolysis stage on the ribosome. This chain is Elongation factor Ts, found in Legionella pneumophila subsp. pneumophila (strain Philadelphia 1 / ATCC 33152 / DSM 7513).